The sequence spans 507 residues: Cytochrome P450 71A4 (507 aa).

A helical transmembrane segment spans residues 3–23 (VPCLWYSLLILLLLFIFLLIH). A heme-binding site is contributed by cysteine 448.

The protein belongs to the cytochrome P450 family. Requires heme as cofactor.

The protein resides in the membrane. In terms of biological role, may have a role in maturation, such as during flavor formation or other metabolite production specific to aging tissues. This Solanum melongena (Eggplant) protein is Cytochrome P450 71A4 (CYP71A4).